Reading from the N-terminus, the 1575-residue chain is Lysophospholipase NTE1 (1575 aa).

The segment at 1–56 (MNLTTTMPAAVAPDPPAQLAVSSRSLSDSSDAAGASRTSSSCRASSPSHCPTHAWN) is disordered. The Cytoplasmic portion of the chain corresponds to 1-99 (MNLTTTMPAA…TLSPPNLLQG (99 aa)). Residues 19–48 (LAVSSRSLSDSSDAAGASRTSSSCRASSPS) show a composition bias toward low complexity. A helical membrane pass occupies residues 100–120 (IVSQLAMASYIGRLLLYLFQV). Residues 121-151 (VPSLLYWAITFTTITVPTALFTLFSMSLTFT) are Lumenal-facing. Residues 152–172 (MNFTTLLIIVLLLVSTVSWFI) traverse the membrane as a helical segment. Residues 173–1575 (RYRFLNIYSR…RTMAPRRASI (1403 aa)) are Cytoplasmic-facing. Disordered regions lie at residues 339–425 (DMES…AKSV) and 568–587 (GSASNPIRYGDHESTGVSPG). The segment covering 409–424 (RGHRRKRPSRPKRAKS) has biased composition (basic residues). Residues 737 to 856 (GGTS…TSYR) and 894 to 1014 (RLTT…IAQR) each bind a nucleoside 3',5'-cyclic phosphate. The PNPLA domain maps to 1272–1436 (LVLGGGGARG…VDNLTVARMK (165 aa)). The short motif at 1276 to 1281 (GGGARG) is the GXGXXG element. A GXSXG motif is present at residues 1303-1307 (GTSIG). Catalysis depends on serine 1305, which acts as the Nucleophile. The Proton acceptor role is filled by aspartate 1423. The DGA/G motif lies at 1423–1425 (DGG).

It belongs to the NTE family.

The protein resides in the endoplasmic reticulum membrane. It catalyses the reaction a 1-acyl-sn-glycero-3-phosphocholine + H2O = sn-glycerol 3-phosphocholine + a fatty acid + H(+). Inhibited by organophosphorus esters. In terms of biological role, intracellular phospholipase B that catalyzes the double deacylation of phosphatidylcholine (PC) to glycerophosphocholine (GroPCho). Plays an important role in membrane lipid homeostasis. Responsible for the rapid PC turnover in response to inositol, elevated temperatures, or when choline is present in the growth medium. In Coccidioides immitis (strain RS) (Valley fever fungus), this protein is Lysophospholipase NTE1 (NTE1).